The following is a 756-amino-acid chain: Serine/threonine-protein kinase tousled-like 1-B (756 aa).

Low complexity-rich tracts occupy residues 1–12 (MSVQSNSNSSGS) and 23–34 (STGSPTPGSVSP). Disordered stretches follow at residues 1 to 56 (MSVQ…LDPR) and 69 to 185 (VSGN…QNSS). Positions 45–56 (EGMDELHSLDPR) are enriched in basic and acidic residues. Residues 72–85 (NTGGSTGSASGGPK) are compositionally biased toward gly residues. Residues 93–103 (SSHSFGSLGSS) show a composition bias toward low complexity. The segment covering 104 to 120 (SDKESETPEKKHFESSR) has biased composition (basic and acidic residues). The stretch at 243–268 (DLRRQIDEQQKLLERFKERLNKCTTM) forms a coiled coil. The tract at residues 339-375 (KLLAKRKPSSTPSSQSPTPNESKQRKTKAVNGADNDP) is disordered. Low complexity predominate over residues 347-357 (SSTPSSQSPTP). Residues 397-435 (FKLRLGHLKKEEAEIQAELERLERVRNLHIRELKRINNE) adopt a coiled-coil conformation. A Protein kinase domain is found at 450 to 728 (YLLLHLLGRG…VHQLGSDSYL (279 aa)). Residues 456 to 464 (LGRGGFSEV) and lysine 479 each bind ATP. Aspartate 580 serves as the catalytic Proton acceptor. Residues 734 to 756 (RSNSSGNLQATPASPAPSGIISY) form a disordered region. Over residues 735-745 (SNSSGNLQATP) the composition is skewed to polar residues.

Belongs to the protein kinase superfamily. Ser/Thr protein kinase family. It depends on Mg(2+) as a cofactor.

The protein resides in the nucleus. The enzyme catalyses L-seryl-[protein] + ATP = O-phospho-L-seryl-[protein] + ADP + H(+). The catalysed reaction is L-threonyl-[protein] + ATP = O-phospho-L-threonyl-[protein] + ADP + H(+). This is Serine/threonine-protein kinase tousled-like 1-B (tlk1b) from Danio rerio (Zebrafish).